The sequence spans 223 residues: Glutathione S-transferase 4 (223 aa).

Ala-2 bears the Blocked amino end (Ala) mark. One can recognise a GST N-terminal domain in the interval 4-85; it reads PAVKVYGWAI…HVLRKHKPEL (82 aa). Residues Ser-14, 43–44, 56–57, and 69–70 each bind glutathione; these read HR, KV, and ES. The GST C-terminal domain occupies 90–223; that stretch reads RLEQTAMVDV…VGAGAPKEQE (134 aa).

This sequence belongs to the GST superfamily. Phi family. As to quaternary structure, homodimer or heterodimer of GST-I and GST-IV (=GST-II). In terms of tissue distribution, seedling roots.

It carries out the reaction RX + glutathione = an S-substituted glutathione + a halide anion + H(+). Conjugation of reduced glutathione to a wide number of exogenous and endogenous hydrophobic electrophiles. Involved in the detoxification of certain herbicides. Most active with substrates possessing a chloroacetamide structure. Trans-cinnamic acid and 1-chloro-2,4-dinitrobenzene are not effective substrates. May play an important role in the benoxacor-mediated protection of maize from metolachlor injury. This is Glutathione S-transferase 4 (GST4) from Zea mays (Maize).